Here is a 1378-residue protein sequence, read N- to C-terminus: DNA-directed RNA polymerase subunit beta (1378 aa).

This sequence belongs to the RNA polymerase beta chain family. In terms of assembly, the RNAP catalytic core consists of 2 alpha, 1 beta, 1 beta' and 1 omega subunit. When a sigma factor is associated with the core the holoenzyme is formed, which can initiate transcription.

The enzyme catalyses RNA(n) + a ribonucleoside 5'-triphosphate = RNA(n+1) + diphosphate. In terms of biological role, DNA-dependent RNA polymerase catalyzes the transcription of DNA into RNA using the four ribonucleoside triphosphates as substrates. The protein is DNA-directed RNA polymerase subunit beta of Sorangium cellulosum (strain So ce56) (Polyangium cellulosum (strain So ce56)).